Consider the following 102-residue polypeptide: Cuticle protein 10.9 (102 aa).

Gln-1 is subject to Pyrrolidone carboxylic acid. Positions 1–45 (QLAEQYPPHPYSFSYDATDETGARISTSESGDESNSKTGSYSYQT) are disordered. The 67-residue stretch at 8–74 (PHPYSFSYDA…SIDTNEPGTK (67 aa)) folds into the Chitin-binding type R&amp;R domain. Residues 36 to 45 (SKTGSYSYQT) show a composition bias toward polar residues.

In terms of biological role, component of the cuticle of the tick. Binds chitin. This is Cuticle protein 10.9 from Ixodes ricinus (Common tick).